Reading from the N-terminus, the 248-residue chain is NADP-dependent 3-hydroxy acid dehydrogenase YdfG (248 aa).

NADP(+) is bound by residues 7–12 (GATAGF), 32–33 (RR), 54–55 (DV), and N81. A substrate-binding site is contributed by S134. NADP(+)-binding positions include Y147, K151, and 177 to 185 (PGLVGGTEF). Y147 serves as the catalytic Proton acceptor.

Belongs to the short-chain dehydrogenases/reductases (SDR) family. Homotetramer.

It catalyses the reaction 3-hydroxypropanoate + NADP(+) = 3-oxopropanoate + NADPH + H(+). It carries out the reaction L-allo-threonine + NADP(+) = aminoacetone + CO2 + NADPH. In terms of biological role, NADP-dependent dehydrogenase with broad substrate specificity acting on 3-hydroxy acids. Catalyzes the NADP-dependent oxidation of L-allo-threonine to L-2-amino-3-keto-butyrate, which is spontaneously decarboxylated into aminoacetone. Also acts on D-threonine, L-serine, D-serine, D-3-hydroxyisobutyrate, L-3-hydroxyisobutyrate, D-glycerate and L-glycerate. Able to catalyze the reduction of the malonic semialdehyde to 3-hydroxypropionic acid. YdfG is apparently supplementing RutE, the presumed malonic semialdehyde reductase involved in pyrimidine degradation since both are able to detoxify malonic semialdehyde. This Shigella flexneri protein is NADP-dependent 3-hydroxy acid dehydrogenase YdfG.